Consider the following 715-residue polypeptide: Fatty acid oxidation complex subunit alpha (715 aa).

Residues 1–190 (MIYEGKAITV…KVGAVDAVVA (190 aa)) form an enoyl-CoA hydratase/isomerase region. A substrate-binding site is contributed by D297. Residues 312-715 (HDVKQAAVLG…MAKNGQRFFN (404 aa)) form a 3-hydroxyacyl-CoA dehydrogenase region. Residues M325, D344, 401-403 (VVE), K408, and S430 each bind NAD(+). H451 acts as the For 3-hydroxyacyl-CoA dehydrogenase activity in catalysis. N454 is an NAD(+) binding site. Substrate is bound by residues N501 and Y660.

The protein in the N-terminal section; belongs to the enoyl-CoA hydratase/isomerase family. In the C-terminal section; belongs to the 3-hydroxyacyl-CoA dehydrogenase family. Heterotetramer of two alpha chains (FadB) and two beta chains (FadA).

It catalyses the reaction a (3S)-3-hydroxyacyl-CoA + NAD(+) = a 3-oxoacyl-CoA + NADH + H(+). The enzyme catalyses a (3S)-3-hydroxyacyl-CoA = a (2E)-enoyl-CoA + H2O. The catalysed reaction is a 4-saturated-(3S)-3-hydroxyacyl-CoA = a (3E)-enoyl-CoA + H2O. It carries out the reaction (3S)-3-hydroxybutanoyl-CoA = (3R)-3-hydroxybutanoyl-CoA. It catalyses the reaction a (3Z)-enoyl-CoA = a 4-saturated (2E)-enoyl-CoA. The enzyme catalyses a (3E)-enoyl-CoA = a 4-saturated (2E)-enoyl-CoA. It participates in lipid metabolism; fatty acid beta-oxidation. In terms of biological role, involved in the aerobic and anaerobic degradation of long-chain fatty acids via beta-oxidation cycle. Catalyzes the formation of 3-oxoacyl-CoA from enoyl-CoA via L-3-hydroxyacyl-CoA. It can also use D-3-hydroxyacyl-CoA and cis-3-enoyl-CoA as substrate. This chain is Fatty acid oxidation complex subunit alpha, found in Pseudomonas putida (strain GB-1).